Reading from the N-terminus, the 416-residue chain is Photosystem II stability/assembly factor HCF136, chloroplastic (416 aa).

Residues 1 to 36 (MATTASLHLHLHLLLSSSRRRCRLLVPRAHTDSIST) constitute a chloroplast transit peptide. The transit peptide at 37–67 (GRRRFIADTATASAAAAVGPLVLPRTPLARA) directs the protein to the thylakoid.

The protein belongs to the Ycf48 family.

The protein resides in the plastid. The protein localises to the chloroplast thylakoid lumen. In terms of biological role, essential for photosystem II (PSII) biogenesis; required for assembly of an early intermediate in PSII assembly that includes D2 (psbD) and cytochrome b559. In Oryza sativa subsp. japonica (Rice), this protein is Photosystem II stability/assembly factor HCF136, chloroplastic (HCF136).